The sequence spans 131 residues: Glycine cleavage system H protein (131 aa).

In terms of domain architecture, Lipoyl-binding spans 24 to 106 (TVRVGITDYA…YGEGWLVDLR (83 aa)). At Lys-65 the chain carries N6-lipoyllysine.

Belongs to the GcvH family. As to quaternary structure, the glycine cleavage system is composed of four proteins: P, T, L and H. (R)-lipoate serves as cofactor.

The glycine cleavage system catalyzes the degradation of glycine. The H protein shuttles the methylamine group of glycine from the P protein to the T protein. In Mycolicibacterium smegmatis (strain ATCC 700084 / mc(2)155) (Mycobacterium smegmatis), this protein is Glycine cleavage system H protein.